A 1002-amino-acid chain; its full sequence is Collagen alpha-2(I) chain (1002 aa).

The segment at 1–1002 is disordered; sequence SGGFDFSFLP…PGPPGPPGAS (1002 aa). Residues Pro-10, Pro-13, Pro-28, and Pro-34 each carry the 4-hydroxyproline modification. Positions 17–60 are enriched in low complexity; sequence GPMGLMGPRGPPGASGAPGPQGFQGPAGEPGEPGQTGPAGARGP. Residue Lys-89 is modified to 5-hydroxylysine; alternate. A glycan (O-linked (Gal...) hydroxylysine; alternate) is linked at Lys-89. Low complexity-rich tracts occupy residues 145–166 and 211–232; these read SRGS…SAGP and PGAN…AGAP. The span at 266-275 shows a compositional bias: gly residues; sequence GESGGKGEPG. Positions 276 to 286 are enriched in low complexity; it reads SAGPQGPPGSS. The segment covering 308 to 317 has biased composition (gly residues); it reads GLRGGPGSRG. Residues 330–346 are compositionally biased toward low complexity; sequence PAGARGASGPAGVRGPS. A 4-hydroxyproline mark is found at Pro-352 and Pro-355. A compositionally biased stretch (low complexity) spans 381-400; sequence LPGIDGRPGPIGPAGARGEA. Residues 449–458 are compositionally biased toward gly residues; it reads GVQGGKGEQG. Low complexity-rich tracts occupy residues 505-522 and 534-544; these read PGES…SRGP and EPGVVGAPGTA. A compositionally biased stretch (gly residues) spans 545 to 554; it reads GPAGSGGLPG. Composition is skewed to low complexity over residues 577–621 and 628–648; these read VGTT…PRGS and VGPA…QPGA. The segment covering 649-658 has biased composition (basic and acidic residues); the sequence is KGERGTKGPK. Positions 666 to 676 are enriched in low complexity; sequence PTGPVGSAGPA. A compositionally biased stretch (gly residues) spans 686-695; that stretch reads GSRGDGGPPG. Residues 697–706 show a composition bias toward low complexity; the sequence is TGFPGAAGRT. A compositionally biased stretch (gly residues) spans 743-752; that stretch reads GETGAGGPPG. 2 stretches are compositionally biased toward low complexity: residues 760 to 787 and 795 to 805; these read SGEP…LGLP and LPGVAGAVGEP. A compositionally biased stretch (gly residues) spans 806–828; sequence GPLGIGPPGARGPSGGVGPGVNG. A compositionally biased stretch (basic and acidic residues) spans 833–851; the sequence is AGRDGPPGRDGLPGHKGER. Over residues 853 to 898 the composition is skewed to low complexity; it reads YAGNAGPVGAAGAPGPHGAVGPAGKHGNRGEPGPVGSAGPVGALGP. The segment covering 908 to 919 has biased composition (basic and acidic residues); the sequence is RGDKGEAGDKGP. Over residues 987–1002 the composition is skewed to pro residues; sequence SGPPGPPGPPGPPGAS.

Belongs to the fibrillar collagen family. Trimers of one alpha 2(I) and two alpha 1(I) chains. Interacts (via C-terminus) with TMEM131 (via PapD-L domain); the interaction is direct and is involved in assembly and TRAPPIII ER-to-Golgi transport complex-dependent secretion of collagen. Post-translationally, prolines at the third position of the tripeptide repeating unit (G-X-Y) are hydroxylated in some or all of the chains. As to expression, expressed in bones.

The protein resides in the secreted. The protein localises to the extracellular space. It localises to the extracellular matrix. Its function is as follows. Type I collagen is a member of group I collagen (fibrillar forming collagen). The polypeptide is Collagen alpha-2(I) chain (Glossotherium robustum (Ground sloth)).